A 593-amino-acid chain; its full sequence is MRSHYCGDVNKSHVGQEVTLVGWVNRSRDLGGVVFLDMRDREGIVQVVYDPDLPEVFEVASSLRSEFCVQIKGLVRARPDSQVNADMRTGEIEILGLELTVLNSSAPLPINMDKNQHNTEEQRLKYRYLDLRRPEMADRIVFRSKVTSAVRRFLDGNGFLDIETPILTKATPEGARDYLVPSRTYKGQFFALPQSPQLFKQLLMMSGFDRYYQIVKCFRDEDLRADRQPEFTQIDIETSFMTSEQVMAKTEEMTRGLFKELLDVDLGEFPRMTFAEAMRRYGSDKPDLRNPLELIDIADLVKEVEFAVFNGPANDPEGRVAVLSIPGGAKLSRKQLDEYAKYVTIYGAKGLAWMKVNDLDKGMEGIQSPVLKFLTEDVVKALLERTGAQTGDVILFGADKANVVAEAMGALRLKAGEDFDLLKGDWKPLWVVDFPMFERTSDGGLHAMHHPFTAPSNMTPAELEANPTAAISDAYDMVLNGCELGGGSVRIHNSEMQSAVFRILGINDEEANEKFGFLLEALRYGTPPHAGLAFGLDRIIMLMTGASSIRDVMAFPKTTTAACPLTNAPGFANPVQLVELGVSVIEPEVKDGE.

Residue E173 participates in L-aspartate binding. Residues 197–200 (QLFK) form an aspartate region. R219 lines the L-aspartate pocket. ATP contacts are provided by residues 219 to 221 (RDE) and Q228. Residue H449 coordinates L-aspartate. E483 is a binding site for ATP. R490 lines the L-aspartate pocket. ATP is bound at residue 535–538 (GLDR).

The protein belongs to the class-II aminoacyl-tRNA synthetase family. Type 1 subfamily. As to quaternary structure, homodimer.

It is found in the cytoplasm. The catalysed reaction is tRNA(Asp) + L-aspartate + ATP = L-aspartyl-tRNA(Asp) + AMP + diphosphate. Functionally, catalyzes the attachment of L-aspartate to tRNA(Asp) in a two-step reaction: L-aspartate is first activated by ATP to form Asp-AMP and then transferred to the acceptor end of tRNA(Asp). The polypeptide is Aspartate--tRNA ligase (Shewanella piezotolerans (strain WP3 / JCM 13877)).